A 927-amino-acid chain; its full sequence is Isoleucine--tRNA ligase (927 aa).

Residues 60–70 (PYANGNIHLGH) carry the 'HIGH' region motif. Glu557 lines the L-isoleucyl-5'-AMP pocket. The 'KMSKS' region motif lies at 598 to 602 (KMSKS). Lys601 contacts ATP. Positions 895, 898, 915, and 918 each coordinate Zn(2+).

It belongs to the class-I aminoacyl-tRNA synthetase family. IleS type 1 subfamily. As to quaternary structure, monomer. The cofactor is Zn(2+).

The protein localises to the cytoplasm. The enzyme catalyses tRNA(Ile) + L-isoleucine + ATP = L-isoleucyl-tRNA(Ile) + AMP + diphosphate. Catalyzes the attachment of isoleucine to tRNA(Ile). As IleRS can inadvertently accommodate and process structurally similar amino acids such as valine, to avoid such errors it has two additional distinct tRNA(Ile)-dependent editing activities. One activity is designated as 'pretransfer' editing and involves the hydrolysis of activated Val-AMP. The other activity is designated 'posttransfer' editing and involves deacylation of mischarged Val-tRNA(Ile). The polypeptide is Isoleucine--tRNA ligase (Syntrophomonas wolfei subsp. wolfei (strain DSM 2245B / Goettingen)).